The primary structure comprises 333 residues: 1,5-anhydro-D-fructose reductase (333 aa).

NADP(+)-binding positions include 9–12, 33–34, R38, 71–76, 93–94, N120, 162–163, and Y283; these read ASTI, SS, TTNELH, EK, and WR.

Belongs to the Gfo/Idh/MocA family. In terms of assembly, monomer.

It catalyses the reaction 1,5-anhydro-D-mannitol + NADP(+) = 1,5-anhydro-D-fructose + NADPH + H(+). In terms of biological role, catalyzes the NADPH-specific reduction of 1,5-anhydro-D-fructose to 1,5-anhydro-D-mannitol. The protein is 1,5-anhydro-D-fructose reductase (afr) of Rhizobium meliloti (strain 1021) (Ensifer meliloti).